The sequence spans 341 residues: 4-(gamma-L-glutamylamino)butanoyl-[BtrI acyl-carrier protein] monooxygenase BtrO (341 aa).

This sequence belongs to the bacterial luciferase oxidoreductase family.

It carries out the reaction 4-(gamma-L-glutamylamino)butanoyl-[BtrI ACP] + FMNH2 + O2 = 4-(gamma-L-glutamylamino)-(2S)-2-hydroxybutanoyl-[BtrI ACP] + FMN + H2O + H(+). The protein operates within antibiotic biosynthesis; butirosin biosynthesis. Functionally, monooxygenase component of a two-component system involved in the biosynthesis of the side chain of the aminoglycoside antibiotics in the biosynthetic pathway of butirosin. Together with BtrV, mediates hydroxylation of gamma-L-Glu-GABA-S-BtrI. Not able to hydroxylate free substrates, activation by the acyl-carrier protein is mandatory. Octanoyl-S-[BtrI acyl-carrier protein] is also accepted as substrate. The polypeptide is 4-(gamma-L-glutamylamino)butanoyl-[BtrI acyl-carrier protein] monooxygenase BtrO (btrO) (Niallia circulans (Bacillus circulans)).